An 82-amino-acid chain; its full sequence is Defensin-like protein 22 (82 aa).

The first 24 residues, Met-1–Gly-24, serve as a signal peptide directing secretion. 4 disulfides stabilise this stretch: Cys-34–Cys-82, Cys-44–Cys-69, Cys-53–Cys-78, and Cys-57–Cys-80.

Belongs to the DEFL family.

It is found in the secreted. The chain is Defensin-like protein 22 from Arabidopsis thaliana (Mouse-ear cress).